Here is a 405-residue protein sequence, read N- to C-terminus: NAC transcription factor NAM-A1 (405 aa).

Residues 1–10 are compositionally biased toward low complexity; it reads MGSSDSSSGS. The tract at residues 1 to 38 is disordered; sequence MGSSDSSSGSAQKAARHQHEPPPPRQRGSAPELPPGFR. Residues 33–204 form the NAC domain; sequence LPPGFRFHPT…DWVLCRIYKK (172 aa). Residues 137–210 mediate DNA binding; sequence LGVKKALVFY…IYKKINKAAA (74 aa).

Expressed in flag leaves, green spikes and peduncles.

Its subcellular location is the nucleus. Functionally, transcription factor of the NAC family associated with the grain protein content (GPC). Accelerates senescence and increases nutrient remobilization from leaves to developing grains. The tetraploid cultivated wheat (T.durum) contains one additional gene coding for a functional protein (NAM-B2) and one extra pseudogene (NAM-B1). The polypeptide is NAC transcription factor NAM-A1 (NAM-A1) (Triticum turgidum subsp. durum (Durum wheat)).